We begin with the raw amino-acid sequence, 462 residues long: Cysteine--tRNA ligase (462 aa).

Cysteine 28 provides a ligand contact to Zn(2+). A 'HIGH' region motif is present at residues 30-40; the sequence is MTVYDYCHLGH. The Zn(2+) site is built by cysteine 209, histidine 234, and glutamate 238. The 'KMSKS' region signature appears at 266–270; the sequence is KMAKS. Lysine 269 is an ATP binding site.

This sequence belongs to the class-I aminoacyl-tRNA synthetase family. As to quaternary structure, monomer. Requires Zn(2+) as cofactor.

It is found in the cytoplasm. The catalysed reaction is tRNA(Cys) + L-cysteine + ATP = L-cysteinyl-tRNA(Cys) + AMP + diphosphate. The chain is Cysteine--tRNA ligase from Alkalilimnicola ehrlichii (strain ATCC BAA-1101 / DSM 17681 / MLHE-1).